Consider the following 130-residue polypeptide: Small ribosomal subunit protein uS9 (130 aa).

The segment at Arg109–Arg130 is disordered.

It belongs to the universal ribosomal protein uS9 family.

In Oleidesulfovibrio alaskensis (strain ATCC BAA-1058 / DSM 17464 / G20) (Desulfovibrio alaskensis), this protein is Small ribosomal subunit protein uS9.